Here is a 233-residue protein sequence, read N- to C-terminus: Octanoyltransferase (233 aa).

Positions 32–213 (NNIDGILLLL…NFKMIFETDL (182 aa)) constitute a BPL/LPL catalytic domain. Residues 77–84 (RGGNVTYH), 144–146 (AIG), and 157–159 (GFA) contribute to the substrate site. C175 acts as the Acyl-thioester intermediate in catalysis.

It belongs to the LipB family.

It is found in the cytoplasm. It catalyses the reaction octanoyl-[ACP] + L-lysyl-[protein] = N(6)-octanoyl-L-lysyl-[protein] + holo-[ACP] + H(+). Its pathway is protein modification; protein lipoylation via endogenous pathway; protein N(6)-(lipoyl)lysine from octanoyl-[acyl-carrier-protein]: step 1/2. Catalyzes the transfer of endogenously produced octanoic acid from octanoyl-acyl-carrier-protein onto the lipoyl domains of lipoate-dependent enzymes. Lipoyl-ACP can also act as a substrate although octanoyl-ACP is likely to be the physiological substrate. This is Octanoyltransferase from Clostridium kluyveri (strain ATCC 8527 / DSM 555 / NBRC 12016 / NCIMB 10680 / K1).